The sequence spans 42 residues: Cytochrome b559 subunit beta (42 aa).

The chain crosses the membrane as a helical span at residues 17–33 (WLAIHGLAVPTVFFLGA). Histidine 21 lines the heme pocket.

This sequence belongs to the PsbE/PsbF family. Heterodimer of an alpha subunit and a beta subunit. PSII is composed of 1 copy each of membrane proteins PsbA, PsbB, PsbC, PsbD, PsbE, PsbF, PsbH, PsbI, PsbJ, PsbK, PsbL, PsbM, PsbT, PsbX, PsbY, PsbZ, Psb30/Ycf12, at least 3 peripheral proteins of the oxygen-evolving complex and a large number of cofactors. It forms dimeric complexes. The cofactor is heme b.

It localises to the plastid. The protein resides in the chloroplast thylakoid membrane. This b-type cytochrome is tightly associated with the reaction center of photosystem II (PSII). PSII is a light-driven water:plastoquinone oxidoreductase that uses light energy to abstract electrons from H(2)O, generating O(2) and a proton gradient subsequently used for ATP formation. It consists of a core antenna complex that captures photons, and an electron transfer chain that converts photonic excitation into a charge separation. The protein is Cytochrome b559 subunit beta of Guillardia theta (Cryptophyte).